The primary structure comprises 105 residues: uncharacterized protein (105 aa).

The first 19 residues, 1 to 19 (MKLVFIFATAAIMGVVVYG), serve as a signal peptide directing secretion.

This is an uncharacterized protein from Magallana gigas (Pacific oyster).